The following is a 496-amino-acid chain: Palmitoleoyl-protein carboxylesterase NOTUM (496 aa).

An N-terminal signal peptide occupies residues 1-19; the sequence is MGRGVRVLLLLSLLHCAGG. Positions 21 to 46 are disordered; it reads EGRKTWRRRGQQPPPPPRTEAAPAAG. A Phosphoserine; by FAM20C modification is found at Ser81. The N-linked (GlcNAc...) asparagine glycan is linked to Asn96. Residues Ser232, Asp340, and His389 each act as charge relay system in the active site.

It belongs to the pectinacetylesterase family. Notum subfamily. In terms of tissue distribution, rarely expressed in adult normal tissues.

The protein localises to the secreted. The catalysed reaction is [Wnt protein]-O-(9Z)-hexadecenoyl-L-serine + H2O = [Wnt protein]-L-serine + (9Z)-hexadecenoate + H(+). In terms of biological role, carboxylesterase that acts as a key negative regulator of the Wnt signaling pathway by specifically mediating depalmitoleoylation of WNT proteins. Serine palmitoleoylation of WNT proteins is required for efficient binding to frizzled receptors. In Homo sapiens (Human), this protein is Palmitoleoyl-protein carboxylesterase NOTUM.